Reading from the N-terminus, the 280-residue chain is Ribosomal RNA small subunit methyltransferase A (280 aa).

S-adenosyl-L-methionine-binding residues include histidine 13, leucine 15, glycine 40, glutamate 61, aspartate 85, and asparagine 106. A disordered region spans residues 258–280 (RPPADVEDANAPHTEQGKGDNSQ).

Belongs to the class I-like SAM-binding methyltransferase superfamily. rRNA adenine N(6)-methyltransferase family. RsmA subfamily.

Its subcellular location is the cytoplasm. The enzyme catalyses adenosine(1518)/adenosine(1519) in 16S rRNA + 4 S-adenosyl-L-methionine = N(6)-dimethyladenosine(1518)/N(6)-dimethyladenosine(1519) in 16S rRNA + 4 S-adenosyl-L-homocysteine + 4 H(+). In terms of biological role, specifically dimethylates two adjacent adenosines (A1518 and A1519) in the loop of a conserved hairpin near the 3'-end of 16S rRNA in the 30S particle. May play a critical role in biogenesis of 30S subunits. In Alcanivorax borkumensis (strain ATCC 700651 / DSM 11573 / NCIMB 13689 / SK2), this protein is Ribosomal RNA small subunit methyltransferase A.